A 243-amino-acid chain; its full sequence is MIGITQAEAVLTIELQRPERRNALNSQLVEELTQAIRKAGDGSARAIVLTGQGTAFCAGADLSGDAFAADYPDRLIELHKAMDASPMPVVGAINGPAIGAGLQLAMQCDLRVVAPDAFFQFPTSKYGLALDNWSIRRLSSLVGHGRARAMLLSAEKLTAEIALHTGMANRIGTLADAQAWAAEIARLAPLAIQHAKRVLNDDGAIEEAWPAHKELFDKAWGSQDVIEAQVARMEKRPPKFQGA.

Belongs to the enoyl-CoA hydratase/isomerase family.

It carries out the reaction a (3S)-3-hydroxyacyl-CoA = a (2E)-enoyl-CoA + H2O. The enzyme catalyses a 4-saturated-(3S)-3-hydroxyacyl-CoA = a (3E)-enoyl-CoA + H2O. Its function is as follows. Could possibly oxidize fatty acids using specific components. This is Probable enoyl-CoA hydratase echA6 (echA6) from Mycobacterium bovis (strain ATCC BAA-935 / AF2122/97).